Reading from the N-terminus, the 322-residue chain is Cyanophycinase (322 aa).

Catalysis depends on charge relay system residues Ser178, Glu196, and His220.

The protein belongs to the peptidase S51 family.

It carries out the reaction [L-4-(L-arginin-2-N-yl)aspartate](n) + H2O = [L-4-(L-arginin-2-N-yl)aspartate](n-1) + L-4-(L-arginin-2-N-yl)aspartate. In terms of biological role, exopeptidase that catalyzes the hydrolytic cleavage of multi-L-arginyl-poly-L-aspartic acid (cyanophycin; a water-insoluble reserve polymer) into aspartate-arginine dipeptides. The sequence is that of Cyanophycinase (cphB) from Synechococcus elongatus.